A 393-amino-acid polypeptide reads, in one-letter code: NADH-quinone oxidoreductase subunit H 2 (393 aa).

Helical transmembrane passes span 13–33 (VLVTLVIIAAFPLVAGYIVLV), 79–99 (AIFWFAPCISTITGLVAFAVI), 112–132 (VGLLVISATSAVGILGIILGG), 158–178 (LAFALLSGVMVAGTLSMQGIV), 186–206 (VWGIFANYGFMVVPFVLYIIA), 240–260 (LYFLAEYANIFVISSVAVTLF), 278–298 (LNYGVPVILFVGSGLLTFTLI), 309–329 (VLLGVVVLLVLIGAIMAIPMV), 333–353 (MIGLFWFLVKVSVIIYTMIWF), and 368–388 (IGWKIAIPVGMASVMVNAVLG).

This sequence belongs to the complex I subunit 1 family. In terms of assembly, NDH-1 is composed of 14 different subunits. Subunits NuoA, H, J, K, L, M, N constitute the membrane sector of the complex.

The protein resides in the cell inner membrane. The catalysed reaction is a quinone + NADH + 5 H(+)(in) = a quinol + NAD(+) + 4 H(+)(out). Functionally, NDH-1 shuttles electrons from NADH, via FMN and iron-sulfur (Fe-S) centers, to quinones in the respiratory chain. The immediate electron acceptor for the enzyme in this species is believed to be ubiquinone. Couples the redox reaction to proton translocation (for every two electrons transferred, four hydrogen ions are translocated across the cytoplasmic membrane), and thus conserves the redox energy in a proton gradient. This subunit may bind ubiquinone. The polypeptide is NADH-quinone oxidoreductase subunit H 2 (Solibacter usitatus (strain Ellin6076)).